The primary structure comprises 229 residues: Uracil-DNA glycosylase (229 aa).

The active-site Proton acceptor is D70.

The protein belongs to the uracil-DNA glycosylase (UDG) superfamily. UNG family.

It localises to the cytoplasm. It carries out the reaction Hydrolyzes single-stranded DNA or mismatched double-stranded DNA and polynucleotides, releasing free uracil.. Excises uracil residues from the DNA which can arise as a result of misincorporation of dUMP residues by DNA polymerase or due to deamination of cytosine. The sequence is that of Uracil-DNA glycosylase from Chlamydia trachomatis serovar L2b (strain UCH-1/proctitis).